A 125-amino-acid polypeptide reads, in one-letter code: Small ribosomal subunit protein uS13 (125 aa).

The protein belongs to the universal ribosomal protein uS13 family. In terms of assembly, part of the 30S ribosomal subunit. Forms a loose heterodimer with protein S19. Forms two bridges to the 50S subunit in the 70S ribosome.

Its function is as follows. Located at the top of the head of the 30S subunit, it contacts several helices of the 16S rRNA. In the 70S ribosome it contacts the 23S rRNA (bridge B1a) and protein L5 of the 50S subunit (bridge B1b), connecting the 2 subunits; these bridges are implicated in subunit movement. Contacts the tRNAs in the A and P-sites. In Rickettsia prowazekii (strain Madrid E), this protein is Small ribosomal subunit protein uS13.